The sequence spans 507 residues: CWF19-like protein DRN1 (507 aa).

At serine 242 the chain carries Phosphoserine.

This sequence belongs to the CWF19 family. Interacts with DBR1. Interacts with SYF1, a component of the NTC complex. Interacts with lariat-introns and lariat-intermediates.

Its subcellular location is the nucleus. It localises to the cytoplasm. In terms of biological role, involved in branched RNA metabolism, modulating the turnover of lariat-intron pre-mRNAs by the lariat-debranching enzyme DBR1. Enhances the debranching activity of DBR1 in vitro. The polypeptide is CWF19-like protein DRN1 (DRN1) (Saccharomyces cerevisiae (strain ATCC 204508 / S288c) (Baker's yeast)).